The chain runs to 315 residues: Methionyl-tRNA formyltransferase (315 aa).

(6S)-5,6,7,8-tetrahydrofolate is bound at residue 113-116; it reads SILP.

The protein belongs to the Fmt family.

The enzyme catalyses L-methionyl-tRNA(fMet) + (6R)-10-formyltetrahydrofolate = N-formyl-L-methionyl-tRNA(fMet) + (6S)-5,6,7,8-tetrahydrofolate + H(+). In terms of biological role, attaches a formyl group to the free amino group of methionyl-tRNA(fMet). The formyl group appears to play a dual role in the initiator identity of N-formylmethionyl-tRNA by promoting its recognition by IF2 and preventing the misappropriation of this tRNA by the elongation apparatus. The chain is Methionyl-tRNA formyltransferase from Aliivibrio fischeri (strain MJ11) (Vibrio fischeri).